The following is a 427-amino-acid chain: Dihydroorotase (427 aa).

Residues His60 and His62 each contribute to the Zn(2+) site. Substrate-binding positions include His62–Arg64 and Asn94. The Zn(2+) site is built by Asp152, His179, and His232. Residue Asn278 participates in substrate binding. Asp305 provides a ligand contact to Zn(2+). Asp305 is an active-site residue. Substrate-binding positions include His309 and Phe323 to Gly324.

Belongs to the metallo-dependent hydrolases superfamily. DHOase family. Class I DHOase subfamily. Requires Zn(2+) as cofactor.

It catalyses the reaction (S)-dihydroorotate + H2O = N-carbamoyl-L-aspartate + H(+). It participates in pyrimidine metabolism; UMP biosynthesis via de novo pathway; (S)-dihydroorotate from bicarbonate: step 3/3. Its function is as follows. Catalyzes the reversible cyclization of carbamoyl aspartate to dihydroorotate. The chain is Dihydroorotase from Bacillus caldolyticus.